Reading from the N-terminus, the 237-residue chain is Ribosomal RNA small subunit methyltransferase G (237 aa).

S-adenosyl-L-methionine contacts are provided by residues Gly-75, Phe-80, 127-128 (AE), and Arg-146.

The protein belongs to the methyltransferase superfamily. RNA methyltransferase RsmG family.

It localises to the cytoplasm. Specifically methylates the N7 position of a guanine in 16S rRNA. The sequence is that of Ribosomal RNA small subunit methyltransferase G from Synechococcus sp. (strain RCC307).